The sequence spans 358 residues: Phospho-N-acetylmuramoyl-pentapeptide-transferase (358 aa).

A run of 10 helical transmembrane segments spans residues 27–47 (IYAM…VIRV), 73–93 (TMGG…WADL), 97–117 (YIWT…VDDY), 134–154 (MFWQ…KPGF), 170–190 (LWFW…NAVN), 197–217 (GLAI…SYVA), 233–253 (GAGE…GFLW), 261–281 (VFMG…IAVI), 286–306 (ILLV…IFQV), and 335–355 (KIIV…ISTL).

This sequence belongs to the glycosyltransferase 4 family. MraY subfamily. It depends on Mg(2+) as a cofactor.

It localises to the cell inner membrane. It catalyses the reaction UDP-N-acetyl-alpha-D-muramoyl-L-alanyl-gamma-D-glutamyl-meso-2,6-diaminopimeloyl-D-alanyl-D-alanine + di-trans,octa-cis-undecaprenyl phosphate = di-trans,octa-cis-undecaprenyl diphospho-N-acetyl-alpha-D-muramoyl-L-alanyl-D-glutamyl-meso-2,6-diaminopimeloyl-D-alanyl-D-alanine + UMP. The protein operates within cell wall biogenesis; peptidoglycan biosynthesis. Its function is as follows. Catalyzes the initial step of the lipid cycle reactions in the biosynthesis of the cell wall peptidoglycan: transfers peptidoglycan precursor phospho-MurNAc-pentapeptide from UDP-MurNAc-pentapeptide onto the lipid carrier undecaprenyl phosphate, yielding undecaprenyl-pyrophosphoryl-MurNAc-pentapeptide, known as lipid I. The polypeptide is Phospho-N-acetylmuramoyl-pentapeptide-transferase (Pelobacter propionicus (strain DSM 2379 / NBRC 103807 / OttBd1)).